Here is a 255-residue protein sequence, read N- to C-terminus: 5'-nucleotidase SurE (255 aa).

Positions 8, 9, 40, and 93 each coordinate a divalent metal cation.

This sequence belongs to the SurE nucleotidase family. It depends on a divalent metal cation as a cofactor.

Its subcellular location is the cytoplasm. It carries out the reaction a ribonucleoside 5'-phosphate + H2O = a ribonucleoside + phosphate. Nucleotidase that shows phosphatase activity on nucleoside 5'-monophosphates. In Azorhizobium caulinodans (strain ATCC 43989 / DSM 5975 / JCM 20966 / LMG 6465 / NBRC 14845 / NCIMB 13405 / ORS 571), this protein is 5'-nucleotidase SurE.